The chain runs to 171 residues: Large ribosomal subunit protein uL10 (171 aa).

The protein belongs to the universal ribosomal protein uL10 family. Part of the ribosomal stalk of the 50S ribosomal subunit. The N-terminus interacts with L11 and the large rRNA to form the base of the stalk. The C-terminus forms an elongated spine to which L12 dimers bind in a sequential fashion forming a multimeric L10(L12)X complex.

Its function is as follows. Forms part of the ribosomal stalk, playing a central role in the interaction of the ribosome with GTP-bound translation factors. The protein is Large ribosomal subunit protein uL10 of Erythrobacter litoralis (strain HTCC2594).